The primary structure comprises 232 residues: Phosphatidylserine decarboxylase proenzyme (232 aa).

Residue Ser190 is the Schiff-base intermediate with substrate; via pyruvic acid of the active site. The residue at position 190 (Ser190) is a Pyruvic acid (Ser); by autocatalysis.

Belongs to the phosphatidylserine decarboxylase family. PSD-A subfamily. As to quaternary structure, heterodimer of a large membrane-associated beta subunit and a small pyruvoyl-containing alpha subunit. Pyruvate is required as a cofactor. Post-translationally, is synthesized initially as an inactive proenzyme. Formation of the active enzyme involves a self-maturation process in which the active site pyruvoyl group is generated from an internal serine residue via an autocatalytic post-translational modification. Two non-identical subunits are generated from the proenzyme in this reaction, and the pyruvate is formed at the N-terminus of the alpha chain, which is derived from the carboxyl end of the proenzyme. The post-translation cleavage follows an unusual pathway, termed non-hydrolytic serinolysis, in which the side chain hydroxyl group of the serine supplies its oxygen atom to form the C-terminus of the beta chain, while the remainder of the serine residue undergoes an oxidative deamination to produce ammonia and the pyruvoyl prosthetic group on the alpha chain.

The protein localises to the cell membrane. It carries out the reaction a 1,2-diacyl-sn-glycero-3-phospho-L-serine + H(+) = a 1,2-diacyl-sn-glycero-3-phosphoethanolamine + CO2. Its pathway is phospholipid metabolism; phosphatidylethanolamine biosynthesis; phosphatidylethanolamine from CDP-diacylglycerol: step 2/2. Its function is as follows. Catalyzes the formation of phosphatidylethanolamine (PtdEtn) from phosphatidylserine (PtdSer). Important for establishment of root nodule symbiosis with the host plant. The protein is Phosphatidylserine decarboxylase proenzyme of Rhizobium meliloti (strain 1021) (Ensifer meliloti).